We begin with the raw amino-acid sequence, 134 residues long: Profilin-2 (134 aa).

The cysteines at positions 13 and 118 are disulfide-linked. An Involved in PIP2 interaction motif is present at residues 84–100 (AVIRGKKGAGGITIKKT). The residue at position 114 (T114) is a Phosphothreonine.

Belongs to the profilin family. As to quaternary structure, occurs in many kinds of cells as a complex with monomeric actin in a 1:1 ratio. In terms of processing, phosphorylated by MAP kinases.

The protein resides in the cytoplasm. It is found in the cytoskeleton. Binds to actin and affects the structure of the cytoskeleton. At high concentrations, profilin prevents the polymerization of actin, whereas it enhances it at low concentrations. The chain is Profilin-2 from Olea europaea (Common olive).